We begin with the raw amino-acid sequence, 3912 residues long: Chondramide synthase cmdD (3912 aa).

One can recognise a Carrier 1 domain in the interval 1411-1485 (APRNAREETL…ALAEVASASK (75 aa)). Residue serine 1446 is modified to O-(pantetheine 4'-phosphoryl)serine. Positions 1995–2029 (ADEDDEEDDELDEEFDAEVDEEDEDEEEEEDDDGE) are enriched in acidic residues. The segment at 1995 to 2030 (ADEDDEEDDELDEEFDAEVDEEDEDEEEEEDDDGEN) is disordered. The Carrier 2 domain maps to 2989–3064 (APRTATEETL…VLARVIDEAL (76 aa)). Serine 3024 is subject to O-(pantetheine 4'-phosphoryl)serine.

This sequence belongs to the ATP-dependent AMP-binding enzyme family. Requires pantetheine 4'-phosphate as cofactor.

Functionally, involved in the synthesis of chondramides. Activates R-beta-tyrosine and probably phenylalanine. The chain is Chondramide synthase cmdD from Chondromyces crocatus.